The chain runs to 164 residues: Putative anionic 4-hydroxy-benzoate permease (164 aa).

The tract at residues C1–S30 is disordered. Helical transmembrane passes span L62–M82, G97–L117, and P126–G146.

Belongs to the major facilitator superfamily. Cyanate porter (TC 2.A.1.17) family.

The protein resides in the cell membrane. Its function is as follows. May be involved in uptake of anionic 4-hydroxy-benzoate. This chain is Putative anionic 4-hydroxy-benzoate permease, found in Thauera aromatica.